A 182-amino-acid chain; its full sequence is Vacuolar protein sorting-associated protein 29 (182 aa).

Zn(2+) contacts are provided by aspartate 8, histidine 10, and asparagine 39. An N6-acetyllysine modification is found at lysine 50. Zn(2+)-binding residues include aspartate 62, histidine 86, histidine 115, and histidine 117.

The protein belongs to the VPS29 family. In terms of assembly, component of the commander complex consisting of the CCC subcomplex and the retriever subcomplex. Component of the heterotrimeric retriever complex formed by VPS26C, VPS29 and VPS35L; within the complex interacts with VPS35L. Component of the heterotrimeric retromer cargo-selective complex (CSC), also described as vacuolar protein sorting subcomplex (VPS), formed by VPS26 (VPS26A or VPS26B), VPS29 and VPS35. The CSC has a highly elongated structure with VPS26 and VPS29 binding independently at opposite distal ends of VPS35 as central platform. The CSC is believed to associate with variable sorting nexins to form functionally distinct retromer complex variants. The originally described retromer complex (also called SNX-BAR retromer) is a pentamer containing the CSC and a heterodimeric membrane-deforming subcomplex formed between SNX1 or SNX2 and SNX5 or SNX6 (also called SNX-BAR subcomplex); the respective CSC and SNX-BAR subcomplexes associate with low affinity. The CSC associates with SNX3 to form a SNX3-retromer complex. The CSC associates with SNX27, the WASH complex and the SNX-BAR subcomplex to form the SNX27-retromer complex. Interacts with VPS26A, VPS35, SNX1, SNX2, SNX3, SNX27, WASHC5. Interacts with TBC1D5; this interaction is blocked by VPS35L in the retriever complex. Interacts with SNX17; the interaction is indirect; SNX17 (via its C-terminus) interacts with the retriever complex (via VPS26C and VPS35L). Interacts with VPS26B and ANKRD27. As to quaternary structure, (Microbial infection) Interacts with human papillomavirus 16 minor capsid protein L2 (via C-terminus); this interaction mediates the transport of the capsid from the early endosome to the Golgi apparatus. In terms of tissue distribution, ubiquitous. Highly expressed in heart, lung, placenta, spleen, peripheral blood leukocytes, thymus, colon skeletal muscle, kidney and brain.

Its subcellular location is the cytoplasm. It is found in the membrane. The protein localises to the endosome membrane. The protein resides in the early endosome. It localises to the late endosome. Component of the commander complex that is essential for endosomal recycling of transmembrane cargos; the commander complex is composed of the CCC subcomplex and the retriever subcomplex. Component of the retriever complex, which is a heterotrimeric complex related to retromer cargo-selective complex (CSC) and essential for retromer-independent retrieval and recycling of numerous cargos such as integrin alpha-5/beta-1 (ITGA5:ITGB1). Component of the retromer cargo-selective complex (CSC). The CSC is believed to be the core functional component of retromer or respective retromer complex variants acting to prevent missorting of selected transmembrane cargo proteins into the lysosomal degradation pathway. The recruitment of the CSC to the endosomal membrane involves RAB7A and SNX3. The SNX-BAR retromer mediates retrograde transport of cargo proteins from endosomes to the trans-Golgi network (TGN) and is involved in endosome-to-plasma membrane transport for cargo protein recycling. The SNX3-retromer mediates the retrograde endosome-to-TGN transport of WLS distinct from the SNX-BAR retromer pathway. The SNX27-retromer is believed to be involved in endosome-to-plasma membrane trafficking and recycling of a broad spectrum of cargo proteins. The CSC seems to act as recruitment hub for other proteins, such as the WASH complex and TBC1D5. Required to regulate transcytosis of the polymeric immunoglobulin receptor (pIgR-pIgA). In the endosomes, retriever complex drives the retrieval and recycling of NxxY-motif-containing cargo proteins by coupling to SNX17, a cargo essential for the homeostatic maintenance of numerous cell surface proteins associated with processes that include cell migration, cell adhesion, nutrient supply and cell signaling. The recruitment of the retriever complex to the endosomal membrane involves CCC and WASH complexes. Involved in GLUT1 endosome-to-plasma membrane trafficking; the function is dependent of association with ANKRD27. In terms of biological role, (Microbial infection) The heterotrimeric retromer cargo-selective complex (CSC) mediates the exit of human papillomavirus from the early endosome and the delivery to the Golgi apparatus. The polypeptide is Vacuolar protein sorting-associated protein 29 (Homo sapiens (Human)).